A 376-amino-acid polypeptide reads, in one-letter code: tRNA-specific 2-thiouridylase MnmA (376 aa).

Residues 14 to 21 and Met40 contribute to the ATP site; that span reads GMSGGVDS. Residues 100–102 are interaction with target base in tRNA; that stretch reads NPD. Cys105 acts as the Nucleophile in catalysis. The cysteines at positions 105 and 202 are disulfide-linked. Gly129 contributes to the ATP binding site. Positions 152–154 are interaction with tRNA; it reads KDQ. Cys202 (cysteine persulfide intermediate) is an active-site residue. An interaction with tRNA region spans residues 315–316; that stretch reads RY.

It belongs to the MnmA/TRMU family.

The protein resides in the cytoplasm. It carries out the reaction S-sulfanyl-L-cysteinyl-[protein] + uridine(34) in tRNA + AH2 + ATP = 2-thiouridine(34) in tRNA + L-cysteinyl-[protein] + A + AMP + diphosphate + H(+). Catalyzes the 2-thiolation of uridine at the wobble position (U34) of tRNA, leading to the formation of s(2)U34. The sequence is that of tRNA-specific 2-thiouridylase MnmA from Lactococcus lactis subsp. cremoris (strain SK11).